A 182-amino-acid chain; its full sequence is ATP-dependent protease subunit HslV (182 aa).

Thr12 is an active-site residue. The Na(+) site is built by Ala167, Cys170, and Thr173.

Belongs to the peptidase T1B family. HslV subfamily. In terms of assembly, a double ring-shaped homohexamer of HslV is capped on each side by a ring-shaped HslU homohexamer. The assembly of the HslU/HslV complex is dependent on binding of ATP.

The protein resides in the cytoplasm. The catalysed reaction is ATP-dependent cleavage of peptide bonds with broad specificity.. Allosterically activated by HslU binding. Functionally, protease subunit of a proteasome-like degradation complex believed to be a general protein degrading machinery. The sequence is that of ATP-dependent protease subunit HslV from Chlorobium phaeovibrioides (strain DSM 265 / 1930) (Prosthecochloris vibrioformis (strain DSM 265)).